A 476-amino-acid polypeptide reads, in one-letter code: Adenosylhomocysteinase (476 aa).

Substrate-binding residues include Thr-67, Asp-142, and Glu-202. 203–205 provides a ligand contact to NAD(+); it reads TTT. 2 residues coordinate substrate: Lys-232 and Asp-236. NAD(+) contacts are provided by residues Asn-237, 266–271, Glu-289, Asn-324, 345–347, and Asn-390; these read GYGDVG and IGH.

Belongs to the adenosylhomocysteinase family. Requires NAD(+) as cofactor.

The protein localises to the cytoplasm. The enzyme catalyses S-adenosyl-L-homocysteine + H2O = L-homocysteine + adenosine. It functions in the pathway amino-acid biosynthesis; L-homocysteine biosynthesis; L-homocysteine from S-adenosyl-L-homocysteine: step 1/1. In terms of biological role, may play a key role in the regulation of the intracellular concentration of adenosylhomocysteine. This chain is Adenosylhomocysteinase, found in Prochlorococcus marinus (strain MIT 9313).